Here is a 1582-residue protein sequence, read N- to C-terminus: ATP-binding cassette sub-family C member 8 (1582 aa).

Residues 1 to 30 lie on the Extracellular side of the membrane; sequence MPLAFCGTENHSAAYRVDQGVLNNGCFVDA. A disulfide bridge links Cys-6 with Cys-26. N-linked (GlcNAc...) asparagine glycosylation occurs at Asn-10. A helical membrane pass occupies residues 31 to 47; sequence LNVVPHVFLLFITFPIL. Residues 48–72 are Cytoplasmic-facing; it reads FIGWGSQSSKVHIHHSTWLHFPGHN. A helical transmembrane segment spans residues 73-89; the sequence is LRWILTFILLFVLVCEI. Residues 90-106 are Extracellular-facing; the sequence is AEGILSDGVTESRHLHL. Residues 107–123 traverse the membrane as a helical segment; the sequence is YMPAGMAFMAAITSVVY. Residues 124 to 136 lie on the Cytoplasmic side of the membrane; sequence YHNIETSNFPKLL. The chain crosses the membrane as a helical span at residues 137–153; the sequence is IALLIYWTLAFITKTIK. At 154 to 169 the chain is on the extracellular side; it reads FVKFYDHAIGFSQLRF. Residues 170 to 186 form a helical membrane-spanning segment; the sequence is CLTGLLVILYGMLLLVE. At 187–303 the chain is on the cytoplasmic side; it reads VNVIRVRRYV…AFGRRLVLSS (117 aa). The 304-residue stretch at 299–602 folds into the ABC transmembrane type-1 1 domain; the sequence is LVLSSTFRIL…LSSVVRSTVK (304 aa). Residues 304–319 traverse the membrane as a helical segment; it reads TFRILADLLGFAGPLC. Topologically, residues 320 to 356 are extracellular; that stretch reads IFGIVDHLGKENHVFQPKTQFLGVYFVSSQEFLGNAY. A helical transmembrane segment spans residues 357-372; that stretch reads VLAVLLFLALLLQRTF. Residues 373-438 are Cytoplasmic-facing; it reads LQASYYVAIE…MWFFFLCPNL (66 aa). The helical transmembrane segment at 439–454 threads the bilayer; the sequence is WAMPVQIIVGVILLYY. At 455 to 460 the chain is on the extracellular side; the sequence is ILGVSA. A helical membrane pass occupies residues 461–473; it reads LIGAAVIILLAPV. At 474–541 the chain is on the cytoplasmic side; the sequence is QYFVATKLSQ…SLRAFAVYTS (68 aa). A helical membrane pass occupies residues 542-557; that stretch reads ISIFMNTAIPIAAVLI. Residues 558 to 576 lie on the Extracellular side of the membrane; it reads TFVGHVSFFKESDFSPSVA. Residues 577–592 form a helical membrane-spanning segment; it reads FASLSLFHILVTPLFL. Residues 593–1013 are Cytoplasmic-facing; that stretch reads LSSVVRSTVK…YLSSAGILLL (421 aa). Positions 679–930 constitute an ABC transporter 1 domain; the sequence is VQIIGGFFTW…ECQLFEHWKT (252 aa). Residues Trp-688, Gly-716, Ser-720, and Ser-721 each contribute to the ATP site. Ser-720 provides a ligand contact to Mg(2+). The disordered stretch occupies residues 741-768; sequence SSLPDSEGEDPSNPERETAADSDARSRG. Residues 753–766 are compositionally biased toward basic and acidic residues; it reads NPERETAADSDARS. Gln-775 is a binding site for Mg(2+). Positions 939–950 are enriched in basic and acidic residues; sequence LEKETVMERKAP. Residues 939 to 962 are disordered; the sequence is LEKETVMERKAPEPSQGLPRAMSS. Residues 1013–1307 form the ABC transmembrane type-1 2 domain; that stretch reads LSLLVFSQLL…MVRNLADMEI (295 aa). The helical transmembrane segment at 1014 to 1031 threads the bilayer; that stretch reads SLLVFSQLLKHMVLVAID. The Extracellular segment spans residues 1032-1067; that stretch reads YWLAKWTDSALVLSPAARNCSLSQECALDQSVYAMV. Asn-1050 carries an N-linked (GlcNAc...) asparagine glycan. The chain crosses the membrane as a helical span at residues 1068 to 1084; that stretch reads FTVLCSLGIALCLVTSV. Topologically, residues 1085-1143 are cytoplasmic; the sequence is TVEWTGLKVAKRLHRSLLNRIILAPMRFFETTPLGSILNRFSSDCNTIDQHIPSTLECL. Residues 1144–1161 form a helical membrane-spanning segment; that stretch reads SRSTLLCVSALAVISYVT. Position 1162 (Pro-1162) is a topological domain, extracellular. Residues 1163 to 1175 form a helical membrane-spanning segment; it reads VFLVALLPLAVVC. At 1176 to 1249 the chain is on the cytoplasmic side; sequence YFIQKYFRVA…FLTAANRWLE (74 aa). Residues 1250–1265 form a helical membrane-spanning segment; that stretch reads VRMEYIGACVVLIAAA. Residues 1266-1281 lie on the Extracellular side of the membrane; it reads TSISNSLHRELSAGLV. Residues 1282–1297 form a helical membrane-spanning segment; that stretch reads GLGLTYALMVSNYLNW. Residues 1298 to 1582 lie on the Cytoplasmic side of the membrane; that stretch reads MVRNLADMEI…VFASFVRADK (285 aa). Residues 1345–1579 form the ABC transporter 2 domain; sequence IQIQNLSVRY…KDSVFASFVR (235 aa). The ADP site is built by Thr-1381, Gly-1382, Gly-1384, Lys-1385, Ser-1386, and Ser-1387. Ser-1483 is an ATP binding site.

The protein belongs to the ABC transporter superfamily. ABCC family. Conjugate transporter (TC 3.A.1.208) subfamily. As to quaternary structure, forms an heterooctamer with KCNJ11; four ABCC8/SUR1 molecules interact with one KCNJ11 homotetramer.

The protein resides in the cell membrane. Its activity is regulated as follows. KATP channels are regulated by cytoplasmic ATP/ADP ratios; ATP inhibits the channel by closing the pore, while ADP activates the channel. Activated by phosphatidylinositol 4,5-biphosphate (PtdIns(4,5)P2). Regulator subunit of pancreatic ATP-sensitive potassium channel (KATP), playing a major role in the regulation of insulin release. In pancreatic cells, it forms KATP channels with KCNJ11; KCNJ11 forms the channel pore while ABCC8 is required for activation and regulation. This is ATP-binding cassette sub-family C member 8 (Abcc8) from Rattus norvegicus (Rat).